A 444-amino-acid polypeptide reads, in one-letter code: Trigger factor (444 aa).

In terms of domain architecture, PPIase FKBP-type spans 163–248 (GDFLTVDFVG…AKALKKAVAP (86 aa)).

This sequence belongs to the FKBP-type PPIase family. Tig subfamily.

It localises to the cytoplasm. The catalysed reaction is [protein]-peptidylproline (omega=180) = [protein]-peptidylproline (omega=0). Its function is as follows. Involved in protein export. Acts as a chaperone by maintaining the newly synthesized protein in an open conformation. Functions as a peptidyl-prolyl cis-trans isomerase. The protein is Trigger factor of Granulibacter bethesdensis (strain ATCC BAA-1260 / CGDNIH1).